The following is a 255-amino-acid chain: Aliphatic sulfonates import ATP-binding protein SsuB (255 aa).

The 227-residue stretch at Ile-5–Gln-231 folds into the ABC transporter domain. Gly-39–Ser-46 is an ATP binding site.

The protein belongs to the ABC transporter superfamily. Aliphatic sulfonates importer (TC 3.A.1.17.2) family. As to quaternary structure, the complex is composed of two ATP-binding proteins (SsuB), two transmembrane proteins (SsuC) and a solute-binding protein (SsuA).

The protein resides in the cell membrane. It carries out the reaction ATP + H2O + aliphatic sulfonate-[sulfonate-binding protein]Side 1 = ADP + phosphate + aliphatic sulfonateSide 2 + [sulfonate-binding protein]Side 1.. Its function is as follows. Part of the ABC transporter complex SsuABC involved in aliphatic sulfonates import. Responsible for energy coupling to the transport system. This chain is Aliphatic sulfonates import ATP-binding protein SsuB, found in Bacillus licheniformis (strain ATCC 14580 / DSM 13 / JCM 2505 / CCUG 7422 / NBRC 12200 / NCIMB 9375 / NCTC 10341 / NRRL NRS-1264 / Gibson 46).